The primary structure comprises 601 residues: MTSALYSGGGKSAGSLESALDEERLEVLRWMKEREEKKHRQLALQYDPIVRDYCLVKHGDSGYRMDSSLMTSLPHSRNPPIFEAIQGEQPSDIDTLNLKKVKSGPTSPSSIDRLSSPNAKAGDILASSLFSSGSPPDTTRRNSTSNLSSVSTNSDKSRTIGSNYNMLQSTKSTASQRRMSDSSTPSTTKSKEKIFSPKALSSPTQGASSNVTPESPPEKPIPSFVLSPPPVSATNEANKLSDIQTSSPSQDIPAKHLEPLHLNRSLSSSPSSEDSDLSLSSDSDDDEKKQPSKSEKTSSMSVSIKPPKIIRKGSKEQNRIAKEKASGAPLTKSKSHNDTSTEYDSNSLRRSRSNPAFANDDTVHPNTSFVSSNINNWYGSDLEELEQDVKTAKSMKVDIGPTRWIPTANRTIRCIRRGDFQTAASSSKRNCTYFLTLDLSSESLHAAEWAVGILLRNGDTLIIVDVIECDDPSARAVKDRMESEQLETLEKITKYILKLLSKTVLEVEVNIEVIHHEKAKHLIIEMIDYIEPSLVVMGSRGRSHLKGVLLGSFSNYLVNKSSVPVMVARKKLKKNKQRLGNQSRLANNLSDAIVDEVGRTP.

A disordered region spans residues 127–364 (SSLFSSGSPP…PAFANDDTVH (238 aa)). Residues 128 to 137 (SLFSSGSPPD) are compositionally biased toward polar residues. The span at 141–154 (RNSTSNLSSVSTNS) shows a compositional bias: low complexity. Composition is skewed to polar residues over residues 159–177 (TIGS…ASQR), 199–213 (ALSS…NVTP), and 232–250 (SATN…SPSQ). Residues Ser-247 and Ser-281 each carry the phosphoserine modification. A compositionally biased stretch (low complexity) spans 265–281 (SLSSSPSSEDSDLSLSS). Basic and acidic residues-rich tracts occupy residues 286 to 296 (DEKKQPSKSEK) and 313 to 325 (GSKE…KEKA). Ser-335 is subject to Phosphoserine. Residues 338 to 356 (DTSTEYDSNSLRRSRSNPA) show a composition bias toward polar residues.

This is an uncharacterized protein from Schizosaccharomyces pombe (strain 972 / ATCC 24843) (Fission yeast).